The primary structure comprises 78 residues: MSDIAERVKKIVIDHLGVDAEKVSEGASFIDDLGADSLDTVELVMAFEEEFGVEIPDDAADSILTVGDAVKFIEKAQA.

Residues 2–77 (SDIAERVKKI…DAVKFIEKAQ (76 aa)) form the Carrier domain. S37 bears the O-(pantetheine 4'-phosphoryl)serine mark.

Belongs to the acyl carrier protein (ACP) family. Post-translationally, 4'-phosphopantetheine is transferred from CoA to a specific serine of apo-ACP by AcpS. This modification is essential for activity because fatty acids are bound in thioester linkage to the sulfhydryl of the prosthetic group.

It localises to the cytoplasm. It functions in the pathway lipid metabolism; fatty acid biosynthesis. Its function is as follows. Carrier of the growing fatty acid chain in fatty acid biosynthesis. In Sinorhizobium fredii (strain NBRC 101917 / NGR234), this protein is Acyl carrier protein.